A 381-amino-acid chain; its full sequence is Endolytic peptidoglycan transglycosylase RlpA (381 aa).

An N-terminal signal peptide occupies residues 1-19 (MRKQLPVICVAAGIVLLAA). A lipid anchor (N-palmitoyl cysteine) is attached at Cys-20. Cys-20 is lipidated: S-diacylglycerol cysteine. The tract at residues 196-274 (LPPRPDLSGG…QPAPVSAPVA (79 aa)) is disordered. Low complexity predominate over residues 208–218 (SASSAPAQPQG). One can recognise an SPOR domain in the interval 304-380 (AAASGRFVVQ…AQLQSFIASA (77 aa)).

Belongs to the RlpA family.

The protein localises to the cell membrane. Functionally, lytic transglycosylase with a strong preference for naked glycan strands that lack stem peptides. The protein is Endolytic peptidoglycan transglycosylase RlpA of Salmonella typhimurium (strain LT2 / SGSC1412 / ATCC 700720).